The chain runs to 158 residues: Endoribonuclease YbeY (158 aa).

Residues H119, H123, and D129 each coordinate Zn(2+).

Belongs to the endoribonuclease YbeY family. Zn(2+) is required as a cofactor.

The protein resides in the cytoplasm. Single strand-specific metallo-endoribonuclease involved in late-stage 70S ribosome quality control and in maturation of the 3' terminus of the 16S rRNA. In Chlamydia felis (strain Fe/C-56) (Chlamydophila felis), this protein is Endoribonuclease YbeY.